The primary structure comprises 338 residues: Phenylalanine--tRNA ligase alpha subunit (338 aa).

Glu-252 provides a ligand contact to Mg(2+).

The protein belongs to the class-II aminoacyl-tRNA synthetase family. Phe-tRNA synthetase alpha subunit type 1 subfamily. Tetramer of two alpha and two beta subunits. The cofactor is Mg(2+).

It localises to the cytoplasm. The catalysed reaction is tRNA(Phe) + L-phenylalanine + ATP = L-phenylalanyl-tRNA(Phe) + AMP + diphosphate + H(+). The chain is Phenylalanine--tRNA ligase alpha subunit from Pseudomonas fluorescens (strain SBW25).